The chain runs to 3176 residues: Large tegument protein deneddylase (3176 aa).

Residues 1–12 show a composition bias toward polar residues; that stretch reads MSNGDWGQSQRP. Residues 1-28 are disordered; sequence MSNGDWGQSQRPRGTGPMRGIRTMDVNA. The interval 1-268 is deubiquitination activity; sequence MSNGDWGQSQ…YEANGSGFDL (268 aa). The Peptidase C76 domain occupies 41 to 258; that stretch reads LGTASCNQAH…MLEHYGVYDF (218 aa). Catalysis depends on residues Cys61, Asp193, and His195. Positions 319 to 342 are disordered; sequence PAARYSPAKTNSPPPSPASAAPAS. Tandem repeats lie at residues 335-339, 340-344, 345-349, 350-354, and 355-359. Residues 335–384 are 10 X 5 AA approximate repeats of P-A-S-A-A; sequence PASAAPASAAPASAAPASAAPASAAQASVAPASVAPASAAPASAAPDSAA. A 6; approximate repeat occupies 360 to 364; sequence QASVA. Residues 365-369 form a 7; approximate repeat; it reads PASVA. A run of 2 repeats spans residues 370–374 and 375–379. The segment covering 376 to 386 has biased composition (low complexity); it reads ASAAPDSAAPA. 6 disordered regions span residues 376–683, 928–950, 1170–1193, 1435–1461, 2610–3008, and 3023–3043; these read ASAA…GSGL, LLSG…SIYR, APIS…TPPL, LMET…RARE, GLVS…PGAR, and TYTV…KMPK. The stretch at 380 to 384 is one 10; approximate repeat; the sequence is PDSAA. The segment covering 457–488 has biased composition (pro residues); sequence PRPPVPPHRPPSAARLPPPVIPIPHQSPPASP. Positions 519-546 are enriched in low complexity; it reads AAPSNPEIPLTTPSPSPTAAAAPTATTL. Pro residues predominate over residues 579-636; it reads APSPLLPQQQPPPSAAPAPSPLLPQQQPPPSAARAPSPLPPQQQPLPSATPAPPPAQQ. The interval 581–611 is interaction with inner tegument protein; the sequence is SPLLPQQQPPPSAAPAPSPLLPQQQPPPSAA. Low complexity predominate over residues 1170-1182; sequence APISPASPSATPA. Positions 2619 to 2630 are enriched in polar residues; that stretch reads SADNTPASSDRL. A compositionally biased stretch (low complexity) spans 2643-2654; the sequence is EGSTTAESEASG. Residues 2738–2747 show a composition bias toward pro residues; it reads QPAPQQPPSS. 2 stretches are compositionally biased toward polar residues: residues 2761–2772 and 2811–2831; these read SPHSTPSTASGS and SAAS…SSQD. Basic and acidic residues predominate over residues 2839–2854; the sequence is MQREKKQQGGREEAAE. Composition is skewed to low complexity over residues 2872–2886 and 2901–2912; these read APVV…ATPA and APALGSGLAAPA.

The protein belongs to the herpesviridae large tegument protein family. As to quaternary structure, interacts with host CUL1 and CUL4A; these interactions inhibit the E3 ligase activity of cullins. Interacts with inner tegument protein. Interacts with capsid vertex specific component CVC2. Interacts with the major capsid protein/MCP. Interacts with host TRIM25 and YWHAZ.

Its subcellular location is the virion tegument. It localises to the host cytoplasm. The protein localises to the host nucleus. It catalyses the reaction Thiol-dependent hydrolysis of ester, thioester, amide, peptide and isopeptide bonds formed by the C-terminal Gly of ubiquitin (a 76-residue protein attached to proteins as an intracellular targeting signal).. Its function is as follows. Large tegument protein that plays multiple roles in the viral cycle. During viral entry, remains associated with the capsid while most of the tegument is detached and participates in the capsid transport toward the host nucleus. Plays a role in the routing of the capsid at the nuclear pore complex and subsequent uncoating. Within the host nucleus, acts as a deneddylase and promotes the degradation of nuclear CRLs (cullin-RING ubiquitin ligases) and thereby stabilizes nuclear CRL substrates, while cytoplasmic CRLs remain unaffected. These modifications prevent host cell cycle S-phase progression and create a favorable environment allowing efficient viral genome replication. Participates later in the secondary envelopment of capsids. Indeed, plays a linker role for the association of the outer viral tegument to the capsids together with the inner tegument protein. Counteracts host TLR-mediated NF-kappa-B activation through both MYD88 and TICAM1-dependent pathways by interfering with 'Lys-63'- and 'Lys-48'-linked ubiquitination of signaling intermediates such as TRAF6 and IKBKG. Inhibits type I interferon production by forming a tri-molecular complex with host TRIM25 and 14-3-3 thereby promoting TRIM25 autoubiquitination and sequestration of the ligase into inactive protein aggregates. In turn, host RIGI is recruited to the complex but ubiquitination is severely impaired leading to inhibition of the pathway. Also catalyzes the removal of 'Lys-48'- and 'Lys-63'-linked ubiquitin chains on host TBK1 and STING1 suppressing cGAS-STING signaling in addition to the RIGI-MAVS pathway. Inhibits selective autophagy by deubiquitinating host SQSTM1. In turn, decreased SQSTM1 ubiquitination fails to recruit LC3 to SQSTM1-positive aggregates. In the host nucleus, deubiquitinates topoisomerase II subunits TOP2A and TOP2B thereby stabilizing SUMOylated TOP2 which halts the DNA damage response to TOP2-induced double strand DNA breaks and promotes cell survival. The protein is Large tegument protein deneddylase of Homo sapiens (Human).